An 858-amino-acid polypeptide reads, in one-letter code: Leucine--tRNA ligase (858 aa).

Residues 42–52 (PYPSGRLHMGH) carry the 'HIGH' region motif. Positions 618 to 622 (KMSKS) match the 'KMSKS' region motif. K621 lines the ATP pocket.

This sequence belongs to the class-I aminoacyl-tRNA synthetase family.

It is found in the cytoplasm. The enzyme catalyses tRNA(Leu) + L-leucine + ATP = L-leucyl-tRNA(Leu) + AMP + diphosphate. The chain is Leucine--tRNA ligase from Aliivibrio salmonicida (strain LFI1238) (Vibrio salmonicida (strain LFI1238)).